A 291-amino-acid chain; its full sequence is Deaminated glutathione amidase (291 aa).

The region spanning lysine 13–leucine 268 is the CN hydrolase domain. Residue glutamate 52 is the Proton acceptor of the active site. Lysine 130 (proton donor) is an active-site residue. Cysteine 172 acts as the Nucleophile in catalysis.

The protein belongs to the carbon-nitrogen hydrolase superfamily. NIT1/NIT2 family.

The enzyme catalyses N-(4-oxoglutaryl)-L-cysteinylglycine + H2O = L-cysteinylglycine + 2-oxoglutarate. Catalyzes the hydrolysis of the amide bond in N-(4-oxoglutarate)-L-cysteinylglycine (deaminated glutathione), a metabolite repair reaction to dispose of the harmful deaminated glutathione. The polypeptide is Deaminated glutathione amidase (nit1-1) (Dictyostelium discoideum (Social amoeba)).